Consider the following 672-residue polypeptide: DNA-directed RNA polymerase subunit gamma (672 aa).

Positions 70, 72, 85, and 88 each coordinate Zn(2+). Mg(2+)-binding residues include Asp466, Asp468, and Asp470.

Belongs to the RNA polymerase beta' chain family. RpoC1 subfamily. In cyanobacteria the RNAP catalytic core is composed of 2 alpha, 1 beta, 1 beta', 1 gamma and 1 omega subunit. When a sigma factor is associated with the core the holoenzyme is formed, which can initiate transcription. Requires Mg(2+) as cofactor. It depends on Zn(2+) as a cofactor.

It carries out the reaction RNA(n) + a ribonucleoside 5'-triphosphate = RNA(n+1) + diphosphate. DNA-dependent RNA polymerase catalyzes the transcription of DNA into RNA using the four ribonucleoside triphosphates as substrates. This chain is DNA-directed RNA polymerase subunit gamma, found in Trichodesmium erythraeum (strain IMS101).